The primary structure comprises 837 residues: Leucine-zipper-like transcriptional regulator 1 (837 aa).

Position 2 is an N-acetylalanine (Ala2). 6 Kelch repeats span residues Ala76–Ser125, Met127–Asp182, Leu184–Asp235, Lys236–Tyr282, His292–Ala338, and Ala396–Gly447. Residues Ser324 to Arg352 are disordered. BTB domains follow at residues Cys440 to Arg534 and Cys664 to Pro733.

Belongs to the LZTR1 family. In terms of assembly, homodimer. Component of the BCR(LZTR1) E3 ubiquitin ligase complex, at least composed of CUL3, LZTR1 and RBX1. Interacts with Ras (K-Ras/KRAS, N-Ras/NRAS and H-Ras/HRAS). Interacts with RAF1. Interacts with SHOC2. Interacts with PPP1CB. Post-translationally, phosphorylated on tyrosine upon induction of apoptosis, leading to its degradation by the proteasome. As to expression, widely expressed.

It is found in the endomembrane system. The protein localises to the recycling endosome. It localises to the golgi apparatus. It functions in the pathway protein modification; protein ubiquitination. Functionally, substrate-specific adapter of a BCR (BTB-CUL3-RBX1) E3 ubiquitin-protein ligase complex that mediates ubiquitination of Ras (K-Ras/KRAS, N-Ras/NRAS and H-Ras/HRAS). Is a negative regulator of RAS-MAPK signaling that acts by controlling Ras levels and decreasing Ras association with membranes. This Mus musculus (Mouse) protein is Leucine-zipper-like transcriptional regulator 1.